We begin with the raw amino-acid sequence, 245 residues long: tRNA pseudouridine synthase A (245 aa).

Aspartate 52 functions as the Nucleophile in the catalytic mechanism. A substrate-binding site is contributed by tyrosine 110.

Belongs to the tRNA pseudouridine synthase TruA family. In terms of assembly, homodimer.

The catalysed reaction is uridine(38/39/40) in tRNA = pseudouridine(38/39/40) in tRNA. Formation of pseudouridine at positions 38, 39 and 40 in the anticodon stem and loop of transfer RNAs. The chain is tRNA pseudouridine synthase A from Borrelia duttonii (strain Ly).